The following is a 43-amino-acid chain: VTCDLLSFEAKGFAANHSICAAHCLAIGRKGGSCQNGVCVCRN.

Intrachain disulfides connect Cys-3/Cys-34, Cys-20/Cys-39, and Cys-24/Cys-41.

It localises to the secreted. Antibacterial protein. Strong activity against the Gram-positive bacteria M.luteus, B.megaterium and S.aureus. Reduced activity against Gram-positive bacterium B.subtilis and weak activity against Gram-negative bacterium X.japonicus. No detectable activity against the Gram-negative bacteria E.asbriae, E.coli, P.aeruginosa and S.marcescens. The chain is Defensin-A from Anomala cuprea (Cupreous chafer beetle).